Reading from the N-terminus, the 119-residue chain is Large ribosomal subunit protein uL18 (119 aa).

The protein belongs to the universal ribosomal protein uL18 family. In terms of assembly, part of the 50S ribosomal subunit; part of the 5S rRNA/L5/L18/L25 subcomplex. Contacts the 5S and 23S rRNAs.

Its function is as follows. This is one of the proteins that bind and probably mediate the attachment of the 5S RNA into the large ribosomal subunit, where it forms part of the central protuberance. The sequence is that of Large ribosomal subunit protein uL18 from Solibacter usitatus (strain Ellin6076).